Consider the following 678-residue polypeptide: Endopolyphosphatase (678 aa).

Topologically, residues 1–2 (MR) are cytoplasmic. A helical; Signal-anchor for type II membrane protein transmembrane segment spans residues 3–23 (SPLLASLFALALSIASSEAAI). The Vacuolar segment spans residues 24–678 (SSTEQVPLSG…ELMLVSTETD (655 aa)). The disordered stretch occupies residues 70–109 (YKTGSTFDSGCHRKPKKDGKSEGKKATENERGNEDLDDKE). The segment covering 87-103 (DGKSEGKKATENERGNE) has biased composition (basic and acidic residues). Asparagine 138, asparagine 369, and asparagine 447 each carry an N-linked (GlcNAc...) asparagine glycan. The disordered stretch occupies residues 504–547 (KGSGGHRHDVPKGDCSLPSNEDKPHCTFKRKPRHYSKRSPSRTN). Residues 529-543 (CTFKRKPRHYSKRSP) show a composition bias toward basic residues. Asparagine 591 and asparagine 616 each carry an N-linked (GlcNAc...) asparagine glycan.

The protein belongs to the endopolyphosphatase PPN1 family. A divalent metal cation is required as a cofactor. Processing by proteases in the vacuole may be required for activation.

Its subcellular location is the vacuole membrane. The enzyme catalyses [phosphate](n+1) + n H2O = (n+1) phosphate + n H(+). Functionally, catalyzes the hydrolysis of inorganic polyphosphate (polyP) chains of many hundreds of phosphate residues into shorter lengths. The sequence is that of Endopolyphosphatase (PPN1) from Cryptococcus neoformans var. neoformans serotype D (strain JEC21 / ATCC MYA-565) (Filobasidiella neoformans).